We begin with the raw amino-acid sequence, 408 residues long: Argininosuccinate synthase (408 aa).

ATP contacts are provided by residues alanine 9–serine 17 and alanine 36. The L-citrulline site is built by tyrosine 87 and serine 92. An ATP-binding site is contributed by glycine 117. L-aspartate is bound by residues threonine 119, asparagine 123, and aspartate 124. Position 123 (asparagine 123) interacts with L-citrulline. L-citrulline is bound by residues arginine 127, serine 176, serine 185, glutamate 261, and tyrosine 273.

This sequence belongs to the argininosuccinate synthase family. Type 1 subfamily. As to quaternary structure, homotetramer.

It is found in the cytoplasm. It carries out the reaction L-citrulline + L-aspartate + ATP = 2-(N(omega)-L-arginino)succinate + AMP + diphosphate + H(+). Its pathway is amino-acid biosynthesis; L-arginine biosynthesis; L-arginine from L-ornithine and carbamoyl phosphate: step 2/3. This is Argininosuccinate synthase from Deinococcus deserti (strain DSM 17065 / CIP 109153 / LMG 22923 / VCD115).